Here is a 443-residue protein sequence, read N- to C-terminus: Protein IQ-DOMAIN 11 (443 aa).

The tract at residues 5-20 (KGLFTVLKRIFISEVN) is calmodulin-binding. 2 short sequence motifs (nuclear localization signal) span residues 11 to 18 (LKRIFISE) and 27 to 34 (RRKWTFWK). Residues 44 to 65 (ITAPPEHRTSHESHEEQKEEIV) are disordered. The span at 48–64 (PEHRTSHESHEEQKEEI) shows a compositional bias: basic and acidic residues. 2 consecutive IQ domains span residues 113-138 (AATRIQTAFRGHLARKALRALKGIVK) and 139-161 (LQAYIRGRAVRRQAMTTLKCLQS). The segment covering 277–293 (FSSKTKPKDETLNEKQL) has biased composition (basic and acidic residues). Positions 277 to 361 (FSSKTKPKDE…PRSFDTQSES (85 aa)) are disordered.

This sequence belongs to the IQD family. In terms of assembly, binds to multiple calmodulin (CaM) in the presence of Ca(2+) and CaM-like proteins. In terms of tissue distribution, expressed in hypocotyls, cotyledons, leaves and petioles.

It localises to the nucleus. The protein resides in the cytoplasm. It is found in the cytoskeleton. Functionally, may be involved in cooperative interactions with calmodulins or calmodulin-like proteins. Recruits calmodulin proteins to microtubules, thus being a potential scaffold in cellular signaling and trafficking. Regulates cell shape and elongation in aerial organs (i.e. epidermis pavement cells) probably by regulating cortical microtubules (MT) arrays orientation. May associate with nucleic acids and regulate gene expression at the transcriptional or post-transcriptional level. The chain is Protein IQ-DOMAIN 11 from Arabidopsis thaliana (Mouse-ear cress).